The primary structure comprises 471 residues: MENRGIYYIDFGTQAQFIEEIEKMNSEYYFKNGKNKTYHIITYGCQMNVHDSEKLAGMLNAMGYVETQNLEEADLIIFNTCAVREHAESRVYGNIGPLKRLKDKKPELIIGVCGCMPQQLEVAQKLAKVFPFLDIIFGTKSLHKFPQLLYKAITTKKTVIDVAEDEDVVVEGIPTARREGVSAFVNIIYGCNNFCSYCIVPYVRGRERSRRPEEIIFEIQQLAANGVKEVTLLGQNVNSYGKDLPDGIPFYKLLEKVNAIEGIERIRFVTSHPKDLSDELIFAMRDLEKVCEHIHLPVQSGSTRILRQMNRHYTKEDYLRLVEKLKENIPDIAITTDIIVGFPGETEEDFEDTLDVVRKVEFDSAYTFIYSKRKGTKAAQMPNQVPDEVKHERFQRLVKLVEEIALKKNQQMLGKVCEILIDGYSKRNNLLEGRTRTNKVVNVKCSDEFMYKFVNVKILEASRHWLYGEVI.

Positions 36 to 154 (KTYHIITYGC…FPQLLYKAIT (119 aa)) constitute an MTTase N-terminal domain. Residues C45, C81, C115, C191, C195, and C198 each coordinate [4Fe-4S] cluster. One can recognise a Radical SAM core domain in the interval 177–407 (RREGVSAFVN…VKLVEEIALK (231 aa)). Residues 410–471 (QQMLGKVCEI…SRHWLYGEVI (62 aa)) enclose the TRAM domain.

The protein belongs to the methylthiotransferase family. MiaB subfamily. Monomer. Requires [4Fe-4S] cluster as cofactor.

It is found in the cytoplasm. The catalysed reaction is N(6)-dimethylallyladenosine(37) in tRNA + (sulfur carrier)-SH + AH2 + 2 S-adenosyl-L-methionine = 2-methylsulfanyl-N(6)-dimethylallyladenosine(37) in tRNA + (sulfur carrier)-H + 5'-deoxyadenosine + L-methionine + A + S-adenosyl-L-homocysteine + 2 H(+). In terms of biological role, catalyzes the methylthiolation of N6-(dimethylallyl)adenosine (i(6)A), leading to the formation of 2-methylthio-N6-(dimethylallyl)adenosine (ms(2)i(6)A) at position 37 in tRNAs that read codons beginning with uridine. The chain is tRNA-2-methylthio-N(6)-dimethylallyladenosine synthase from Caldicellulosiruptor saccharolyticus (strain ATCC 43494 / DSM 8903 / Tp8T 6331).